Here is a 123-residue protein sequence, read N- to C-terminus: Proteasome assembly chaperone 4 (123 aa).

Belongs to the PSMG4 family. In terms of assembly, interacts with PSMG3. Associates with alpha subunits of the 20S proteasome.

Its function is as follows. Chaperone protein which promotes assembly of the 20S proteasome. The chain is Proteasome assembly chaperone 4 from Homo sapiens (Human).